A 422-amino-acid polypeptide reads, in one-letter code: MPGATSHVPLLSVVIPTYNRAALLDRTLGTLARQTTALEDFEVVVSDDGSTDTTRDVVRSYEDRLRIKYVFQEDLGYRVASARNGGARLASAPLLAFLDTGVLAGPQYVQSVLAAHAGPAPAKVVLGCCYGYDPRNPHPELHSLVEEFPPEEAVRRVGDAPWFQDMRLPEFTAVDFDLSRMHMPWLWFWTLNVSLPAADFWRVGGFDEDFTGWGGEDIELGYRLHAHGIPMTVSRESWGIEAPHERTHEANVSSLMLNCDRFVRKHPSLLPELFWAVTNRGIFGSVETERLRFEEWASQARGQQVLDEIAIGLDTLPPSQHTQRVAVFGSGTEGLPITPRQNVELFLCDYDEGVLARQESRDDAAVSTWHLSGLRTPWPDQHFDLVIITSRMDGPRQAWGEAFTKEAHRIASSVVEPSLRGD.

Belongs to the glycosyltransferase 2 family. It depends on Mn(2+) as a cofactor.

It carries out the reaction validoxylamine A + UDP-alpha-D-glucose = validamycin A + UDP + H(+). Functionally, involved in the biosynthesis of the antifungal agent validamycin A. Catalyzes the final attachment of glucose from UDP-alpha-D-glucose to validoxylamine A to yield validamycin A. UDP-glucose is the most efficient glycosyl donor, whereas GDP-glucose and ADP-glucose are much less efficient. ValG also utilizes UDP-galactose as substrate to produce the new validamycin analog, 4''-epi-validamycin A. This chain is Validoxylamine A glucosyltransferase, found in Streptomyces hygroscopicus subsp. jinggangensis (strain 5008).